A 148-amino-acid polypeptide reads, in one-letter code: Ribonuclease H (148 aa).

The region spanning 1–142 (MSDSVEMFTD…ADQLANRGVD (142 aa)) is the RNase H type-1 domain. D10, E48, D70, and D134 together coordinate Mg(2+).

The protein belongs to the RNase H family. As to quaternary structure, monomer. It depends on Mg(2+) as a cofactor.

It is found in the cytoplasm. The catalysed reaction is Endonucleolytic cleavage to 5'-phosphomonoester.. Endonuclease that specifically degrades the RNA of RNA-DNA hybrids. The chain is Ribonuclease H from Pseudomonas putida (strain ATCC 700007 / DSM 6899 / JCM 31910 / BCRC 17059 / LMG 24140 / F1).